We begin with the raw amino-acid sequence, 520 residues long: Glutamate--cysteine ligase (520 aa).

This sequence belongs to the glutamate--cysteine ligase type 1 family. Type 1 subfamily.

The catalysed reaction is L-cysteine + L-glutamate + ATP = gamma-L-glutamyl-L-cysteine + ADP + phosphate + H(+). The protein operates within sulfur metabolism; glutathione biosynthesis; glutathione from L-cysteine and L-glutamate: step 1/2. This Sodalis glossinidius (strain morsitans) protein is Glutamate--cysteine ligase.